The primary structure comprises 312 residues: Glyoxylate/hydroxypyruvate reductase A (312 aa).

Arg-227 is a catalytic residue. His-275 (proton donor) is an active-site residue.

Belongs to the D-isomer specific 2-hydroxyacid dehydrogenase family. GhrA subfamily.

The protein resides in the cytoplasm. It carries out the reaction glycolate + NADP(+) = glyoxylate + NADPH + H(+). It catalyses the reaction (R)-glycerate + NAD(+) = 3-hydroxypyruvate + NADH + H(+). The enzyme catalyses (R)-glycerate + NADP(+) = 3-hydroxypyruvate + NADPH + H(+). Catalyzes the NADPH-dependent reduction of glyoxylate and hydroxypyruvate into glycolate and glycerate, respectively. In Enterobacter sp. (strain 638), this protein is Glyoxylate/hydroxypyruvate reductase A.